A 152-amino-acid chain; its full sequence is Large ribosomal subunit protein uL30 (152 aa).

It belongs to the universal ribosomal protein uL30 family. As to quaternary structure, part of the 50S ribosomal subunit.

This chain is Large ribosomal subunit protein uL30, found in Methanobrevibacter smithii (strain ATCC 35061 / DSM 861 / OCM 144 / PS).